Here is a 267-residue protein sequence, read N- to C-terminus: 2-keto-3-deoxy-L-rhamnonate aldolase (267 aa).

His49 (proton acceptor) is an active-site residue. Gln151 lines the substrate pocket. Position 153 (Glu153) interacts with Mg(2+). Positions 178 and 179 each coordinate substrate. Residue Asp179 coordinates Mg(2+).

Belongs to the HpcH/HpaI aldolase family. KDR aldolase subfamily. In terms of assembly, homohexamer. Mg(2+) is required as a cofactor.

The catalysed reaction is 2-dehydro-3-deoxy-L-rhamnonate = (S)-lactaldehyde + pyruvate. Functionally, catalyzes the reversible retro-aldol cleavage of 2-keto-3-deoxy-L-rhamnonate (KDR) to pyruvate and lactaldehyde. This chain is 2-keto-3-deoxy-L-rhamnonate aldolase, found in Escherichia coli (strain UTI89 / UPEC).